We begin with the raw amino-acid sequence, 127 residues long: Aspartate 1-decarboxylase (127 aa).

The active-site Schiff-base intermediate with substrate; via pyruvic acid is Ser-25. The residue at position 25 (Ser-25) is a Pyruvic acid (Ser). Substrate is bound at residue Thr-57. Tyr-58 acts as the Proton donor in catalysis. Residue 73 to 75 (GAA) coordinates substrate.

This sequence belongs to the PanD family. In terms of assembly, heterooctamer of four alpha and four beta subunits. Pyruvate is required as a cofactor. Is synthesized initially as an inactive proenzyme, which is activated by self-cleavage at a specific serine bond to produce a beta-subunit with a hydroxyl group at its C-terminus and an alpha-subunit with a pyruvoyl group at its N-terminus.

It is found in the cytoplasm. It carries out the reaction L-aspartate + H(+) = beta-alanine + CO2. The protein operates within cofactor biosynthesis; (R)-pantothenate biosynthesis; beta-alanine from L-aspartate: step 1/1. In terms of biological role, catalyzes the pyruvoyl-dependent decarboxylation of aspartate to produce beta-alanine. This Listeria monocytogenes serotype 4b (strain F2365) protein is Aspartate 1-decarboxylase.